We begin with the raw amino-acid sequence, 136 residues long: MKNLSIFMFVFSLCMFGHVSRARIRIANELKFKKNLWMRCYSKDDVLGPHIIPIGGHFLDYFGTNFWGTTRFMCTLRQGPNYIHYQSFTAFKLFSMEDHGGLWDWRAREDGIYLKKEGNKFIKNPVNMHKVYDWIN.

Positions Met-1 to Ala-22 are cleaved as a signal peptide.

Belongs to the plant self-incompatibility (S1) protein family.

The protein localises to the secreted. The protein is S-protein homolog 17 of Arabidopsis thaliana (Mouse-ear cress).